Here is a 254-residue protein sequence, read N- to C-terminus: Triosephosphate isomerase (254 aa).

9-11 (NWK) provides a ligand contact to substrate. The active-site Electrophile is His-95. Glu-167 (proton acceptor) is an active-site residue. Substrate is bound by residues Gly-173, Ser-213, and 234–235 (GG).

The protein belongs to the triosephosphate isomerase family. Homodimer.

Its subcellular location is the cytoplasm. It carries out the reaction D-glyceraldehyde 3-phosphate = dihydroxyacetone phosphate. The protein operates within carbohydrate biosynthesis; gluconeogenesis. Its pathway is carbohydrate degradation; glycolysis; D-glyceraldehyde 3-phosphate from glycerone phosphate: step 1/1. Functionally, involved in the gluconeogenesis. Catalyzes stereospecifically the conversion of dihydroxyacetone phosphate (DHAP) to D-glyceraldehyde-3-phosphate (G3P). The chain is Triosephosphate isomerase from Roseiflexus castenholzii (strain DSM 13941 / HLO8).